The following is a 182-amino-acid chain: Putative manganese efflux pump MntP 2 (182 aa).

6 consecutive transmembrane segments (helical) span residues 2-22 (IELT…SIAL), 37-57 (AGGF…YLGV), 63-83 (IGGI…LKMI), 104-123 (LLLL…LTLT), 127-149 (LPLW…GGVH), and 162-182 (AEYL…IEHS).

The protein belongs to the MntP (TC 9.B.29) family.

The protein resides in the cell inner membrane. In terms of biological role, probably functions as a manganese efflux pump. In Wolinella succinogenes (strain ATCC 29543 / DSM 1740 / CCUG 13145 / JCM 31913 / LMG 7466 / NCTC 11488 / FDC 602W) (Vibrio succinogenes), this protein is Putative manganese efflux pump MntP 2.